Here is a 72-residue protein sequence, read N- to C-terminus: Putative snRNP Sm-like protein (72 aa).

Residues Arg4–Pro72 enclose the Sm domain.

Belongs to the snRNP Sm proteins family.

The sequence is that of Putative snRNP Sm-like protein from Methanococcoides burtonii (strain DSM 6242 / NBRC 107633 / OCM 468 / ACE-M).